We begin with the raw amino-acid sequence, 436 residues long: Tubulin epsilon and delta complex protein 2 (436 aa).

Disordered stretches follow at residues 53 to 76 (ARTP…PSSQ) and 94 to 191 (VRKG…PSSA). Residues 111–131 (TSKAATSGAAAASHPRAPSRG) show a composition bias toward low complexity. Basic and acidic residues predominate over residues 153-170 (DYPEHRLRSKGDKTHVRT). The residue at position 161 (Ser-161) is a Phosphoserine.

As to quaternary structure, interacts with TEDC1. Found in a complex with TEDC1, TEDC2, TUBE1 and TUBD1.

It localises to the cell projection. The protein resides in the cilium. Its subcellular location is the cytoplasm. The protein localises to the cytoskeleton. It is found in the microtubule organizing center. It localises to the centrosome. The protein resides in the centriole. Its function is as follows. Acts as a positive regulator of ciliary hedgehog signaling. Required for centriole stability. This is Tubulin epsilon and delta complex protein 2 from Mus musculus (Mouse).